The following is a 729-amino-acid chain: Replication restart protein PriA (729 aa).

The region spanning 209-376 (QTALGRFRSF…QSGAYRLLQL (168 aa)) is the Helicase ATP-binding domain. 222–229 (GITGSGKT) serves as a coordination point for ATP. Residues 319-322 (DEEH) carry the DEAH box motif. Zn(2+) contacts are provided by cysteine 436, cysteine 439, cysteine 445, cysteine 448, cysteine 463, cysteine 466, cysteine 476, and cysteine 479. Residues 471-623 (PIPFKCPDCG…YAVFAENELN (153 aa)) enclose the Helicase C-terminal domain.

The protein belongs to the helicase family. PriA subfamily. As to quaternary structure, interacts with PriB with high affinity in the absence of DNA. Component of the replication restart primosome. It depends on Zn(2+) as a cofactor.

The enzyme catalyses Couples ATP hydrolysis with the unwinding of duplex DNA by translocating in the 3'-5' direction.. It carries out the reaction ATP + H2O = ADP + phosphate + H(+). With respect to regulation, helicase and ATPase activities on forked DNA are stimulated by PriB; E.coli PriB does not stimulate this helicase. PriA:PriB complex-catalyzed duplex DNA winding is inhibited by CGS 15943 (CHEBI:131351). CGS 15943 decreases ATP hydrolysis and decreases PriA's affinity for DNA. Functionally, initiates the restart of stalled replication forks, which reloads the replicative helicase on sites other than the origin of replication. Recognizes and binds to abandoned replication forks and remodels them to uncover a helicase loading site. Promotes assembly of the primosome at these replication forks. DNA helicase with greatest unwinding activity on forked DNA substrates with relatively short duplex lagging strand arms. A DNA-dependent ATPase. Required for DNA transformation and DNA repair. Binds single-stranded (ss)DNA and replication fork-like DNA but not double-stranded (ds)DNA. This is Replication restart protein PriA from Neisseria gonorrhoeae (strain ATCC 700825 / FA 1090).